We begin with the raw amino-acid sequence, 61 residues long: Large ribosomal subunit protein bL32 (61 aa).

Residues Met-1–Asn-10 are compositionally biased toward basic residues. A disordered region spans residues Met-1–Lys-23.

It belongs to the bacterial ribosomal protein bL32 family.

The chain is Large ribosomal subunit protein bL32 from Gloeobacter violaceus (strain ATCC 29082 / PCC 7421).